Consider the following 257-residue polypeptide: uncharacterized protein (257 aa).

A signal peptide spans 1-22 (MIHSKRLRLWLYLVLLAVFIGA). Cys-23 carries N-palmitoyl cysteine lipidation. The S-diacylglycerol cysteine moiety is linked to residue Cys-23.

It belongs to the staphylococcal tandem lipoprotein family.

It is found in the cell membrane. This is an uncharacterized protein from Staphylococcus aureus (strain NCTC 8325 / PS 47).